The chain runs to 179 residues: Large ribosomal subunit protein uL5 (179 aa).

Belongs to the universal ribosomal protein uL5 family. In terms of assembly, part of the 50S ribosomal subunit; part of the 5S rRNA/L5/L18/L25 subcomplex. Contacts the 5S rRNA and the P site tRNA. Forms a bridge to the 30S subunit in the 70S ribosome.

In terms of biological role, this is one of the proteins that bind and probably mediate the attachment of the 5S RNA into the large ribosomal subunit, where it forms part of the central protuberance. In the 70S ribosome it contacts protein S13 of the 30S subunit (bridge B1b), connecting the 2 subunits; this bridge is implicated in subunit movement. Contacts the P site tRNA; the 5S rRNA and some of its associated proteins might help stabilize positioning of ribosome-bound tRNAs. This chain is Large ribosomal subunit protein uL5, found in Alkaliphilus metalliredigens (strain QYMF).